Consider the following 1889-residue polypeptide: Vacuolar membrane-associated protein IML1 (1889 aa).

6 disordered regions span residues 1-74 (MPPP…SRLR), 515-540 (QPGQ…TLTF), 551-570 (SPNK…PLSS), 716-808 (ARLP…LKAP), 838-900 (AGAS…DSPT), and 1252-1272 (PPNE…DTNP). Polar residues predominate over residues 47 to 60 (YSNSPGDTVSSNST). Positions 729-742 (RCRDHEETPRRQAL) are enriched in basic and acidic residues. 3 stretches are compositionally biased toward polar residues: residues 747-766 (PLGT…QTLP), 787-804 (KSMS…SSSP), and 840-853 (ASKT…SQDL). The span at 865-877 (SSSRRLTGGTSTS) shows a compositional bias: low complexity. The 87-residue stretch at 1331 to 1417 (ENGGVRMQNR…DGQYFYQISN (87 aa)) folds into the DEP domain. Disordered regions lie at residues 1424–1484 (PPGW…GNKP) and 1724–1824 (PTPL…WSTW). Low complexity-rich tracts occupy residues 1737 to 1789 (SPAL…PGLT) and 1801 to 1811 (PSTSATTTTAC).

It belongs to the IML1 family.

It is found in the vacuole membrane. This Chaetomium globosum (strain ATCC 6205 / CBS 148.51 / DSM 1962 / NBRC 6347 / NRRL 1970) (Soil fungus) protein is Vacuolar membrane-associated protein IML1 (IML1).